The following is a 330-amino-acid chain: Inactive hydroxysteroid dehydrogenase-like protein 1 (330 aa).

Ala-2 carries the post-translational modification N-acetylalanine. The segment at 2–82 (AAVDSFYLLY…SGATDGIGKA (81 aa)) is required for mitochondria translocation. NADP(+)-binding positions include 74–80 (GATDGIG), Asp-125, and Lys-222.

It belongs to the short-chain dehydrogenases/reductases (SDR) family. 17-beta-HSD 3 subfamily. In terms of assembly, interacts with STYXL1. Highly expressed in testis and ovary. Also detected in thyroid, spinal cord, adrenal gland, heart, placenta, skeletal muscle, small intestine, colon, spleen, prostate and pancreas.

Its subcellular location is the mitochondrion. The polypeptide is Inactive hydroxysteroid dehydrogenase-like protein 1 (HSDL1) (Homo sapiens (Human)).